Here is a 414-residue protein sequence, read N- to C-terminus: Alanine--glyoxylate aminotransferase (414 aa).

The N-terminal 23 residues, methionine 1–methionine 23, are a transit peptide targeting the mitochondrion. N6-(pyridoxal phosphate)lysine is present on lysine 231. Lysine 247 bears the N6-acetyllysine; alternate mark. Residue lysine 247 is modified to N6-succinyllysine; alternate. 2 positions are modified to N6-acetyllysine: lysine 256 and lysine 334. Arginine 382 serves as a coordination point for substrate. The short motif at asparagine 412–leucine 414 is the Microbody targeting signal element.

The protein belongs to the class-V pyridoxal-phosphate-dependent aminotransferase family. As to quaternary structure, homodimer. Pyridoxal 5'-phosphate is required as a cofactor.

It is found in the peroxisome. Its subcellular location is the mitochondrion matrix. It carries out the reaction L-serine + pyruvate = 3-hydroxypyruvate + L-alanine. The enzyme catalyses glyoxylate + L-alanine = glycine + pyruvate. Catalyzes the transamination of glyoxylate to glycine and contributes to the glyoxylate detoxification. In terms of biological role, catalyzes the transamination between L-serine and pyruvate and weakly contributes to gluconeogenesis from the L-serine metabolism. This chain is Alanine--glyoxylate aminotransferase, found in Rattus norvegicus (Rat).